The sequence spans 389 residues: Chitin-binding protein CbpD (389 aa).

The first 25 residues, 1–25, serve as a signal peptide directing secretion; it reads MKHYSATLALLPLTLALFLPQAAHA. Positions 26 to 208 constitute a Chitin-binding type-4 domain; that stretch reads HGSMETPPSR…EAFYACIDVS (183 aa). The residue at position 37 (Tyr-37) is a Phosphotyrosine. Position 210 is a phosphoserine (Ser-210).

The protein localises to the secreted. Functionally, binds but does not hydrolyze chitin. The polypeptide is Chitin-binding protein CbpD (cpbD) (Pseudomonas aeruginosa (strain UCBPP-PA14)).